Reading from the N-terminus, the 74-residue chain is Anaphase-promoting complex subunit 13 (74 aa).

The tract at residues 33–56 (LSELPEPEQDNGGTTESVKEQEMK) is disordered.

It belongs to the APC13 family. The mammalian APC/C is composed at least of 14 distinct subunits ANAPC1, ANAPC2, CDC27/APC3, ANAPC4, ANAPC5, CDC16/APC6, ANAPC7, CDC23/APC8, ANAPC10, ANAPC11, CDC26/APC12, ANAPC13, ANAPC15 and ANAPC16 that assemble into a complex of at least 19 chains with a combined molecular mass of around 1.2 MDa; APC/C interacts with FZR1 and FBXO5.

It localises to the nucleus. The protein operates within protein modification; protein ubiquitination. Its function is as follows. Component of the anaphase promoting complex/cyclosome (APC/C), a cell cycle-regulated E3 ubiquitin ligase that controls progression through mitosis and the G1 phase of the cell cycle. The APC/C complex acts by mediating ubiquitination and subsequent degradation of target proteins: it mainly mediates the formation of 'Lys-11'-linked polyubiquitin chains and, to a lower extent, the formation of 'Lys-48'- and 'Lys-63'-linked polyubiquitin chains. The APC/C complex catalyzes assembly of branched 'Lys-11'-/'Lys-48'-linked branched ubiquitin chains on target proteins. This is Anaphase-promoting complex subunit 13 (Anapc13) from Mus musculus (Mouse).